The sequence spans 43 residues: Myotoxin-2 (43 aa).

3 disulfide bridges follow: C4–C36, C11–C30, and C18–C37.

Belongs to the crotamine-myotoxin family. Monomer. As to expression, expressed by the venom gland.

The protein localises to the secreted. Cationic peptide that possesses multiple functions. It acts as a cell-penetrating peptide (CPP), and as a potent voltage-gated potassium channel (Kv) inhibitor. It exhibits antimicrobial activities, hind limb paralysis, and severe muscle necrosis by a non-enzymatic mechanism. This Crotalus concolor (Midget faded rattlesnake) protein is Myotoxin-2.